The following is a 101-amino-acid chain: Ascorbate-specific PTS system EIIB component (101 aa).

The PTS EIIB type-2 domain maps to 3 to 96; the sequence is VRILAVCGNG…KLLEVIKAHF (94 aa). C9 serves as the catalytic Phosphocysteine intermediate. C9 is modified (phosphocysteine).

The protein resides in the cytoplasm. It catalyses the reaction N(pros)-phospho-L-histidyl-[protein] + L-ascorbate(out) = L-ascorbate 6-phosphate(in) + L-histidyl-[protein]. In terms of biological role, the phosphoenolpyruvate-dependent sugar phosphotransferase system (sugar PTS), a major carbohydrate active transport system, catalyzes the phosphorylation of incoming sugar substrates concomitantly with their translocation across the cell membrane. The enzyme II UlaABC PTS system is involved in ascorbate transport. This Escherichia coli O6:H1 (strain CFT073 / ATCC 700928 / UPEC) protein is Ascorbate-specific PTS system EIIB component (ulaB).